A 186-amino-acid chain; its full sequence is UPF0301 protein LHK_02881 (186 aa).

The protein belongs to the UPF0301 (AlgH) family.

This Laribacter hongkongensis (strain HLHK9) protein is UPF0301 protein LHK_02881.